The primary structure comprises 958 residues: Valine--tRNA ligase (958 aa).

The 'HIGH' region signature appears at 42–52 (PNVTGSLHMGH). A 'KMSKS' region motif is present at residues 554-558 (KMSKS). Residue Lys-557 participates in ATP binding. Positions 887-956 (LVDVAAEMAR…TEQKAEFAKL (70 aa)) form a coiled coil.

This sequence belongs to the class-I aminoacyl-tRNA synthetase family. ValS type 1 subfamily. As to quaternary structure, monomer.

It localises to the cytoplasm. The enzyme catalyses tRNA(Val) + L-valine + ATP = L-valyl-tRNA(Val) + AMP + diphosphate. Catalyzes the attachment of valine to tRNA(Val). As ValRS can inadvertently accommodate and process structurally similar amino acids such as threonine, to avoid such errors, it has a 'posttransfer' editing activity that hydrolyzes mischarged Thr-tRNA(Val) in a tRNA-dependent manner. The protein is Valine--tRNA ligase of Shewanella oneidensis (strain ATCC 700550 / JCM 31522 / CIP 106686 / LMG 19005 / NCIMB 14063 / MR-1).